Here is a 389-residue protein sequence, read N- to C-terminus: S-adenosylmethionine synthase 2 (389 aa).

H17 is an ATP binding site. D19 lines the Mg(2+) pocket. E45 lines the K(+) pocket. The L-methionine site is built by E58 and Q102. The tract at residues 102-112 (QSADIAVGVDA) is flexible loop. ATP-binding positions include 166–168 (DSK), 231–232 (RF), D240, 246–247 (RK), A263, and K267. Position 240 (D240) interacts with L-methionine. Position 271 (K271) interacts with L-methionine.

Belongs to the AdoMet synthase family. In terms of assembly, homotetramer; dimer of dimers. The cofactor is Mg(2+). It depends on K(+) as a cofactor.

Its subcellular location is the cytoplasm. It catalyses the reaction L-methionine + ATP + H2O = S-adenosyl-L-methionine + phosphate + diphosphate. Its pathway is amino-acid biosynthesis; S-adenosyl-L-methionine biosynthesis; S-adenosyl-L-methionine from L-methionine: step 1/1. Catalyzes the formation of S-adenosylmethionine (AdoMet) from methionine and ATP. The overall synthetic reaction is composed of two sequential steps, AdoMet formation and the subsequent tripolyphosphate hydrolysis which occurs prior to release of AdoMet from the enzyme. This chain is S-adenosylmethionine synthase 2, found in Rhodospirillum rubrum (strain ATCC 11170 / ATH 1.1.1 / DSM 467 / LMG 4362 / NCIMB 8255 / S1).